A 612-amino-acid polypeptide reads, in one-letter code: Dihydroxy-acid dehydratase (612 aa).

Aspartate 81 is a binding site for Mg(2+). [2Fe-2S] cluster is bound at residue cysteine 122. Mg(2+) contacts are provided by aspartate 123 and lysine 124. Lysine 124 carries the post-translational modification N6-carboxylysine. Residue cysteine 193 participates in [2Fe-2S] cluster binding. Glutamate 489 contacts Mg(2+). Serine 515 serves as the catalytic Proton acceptor.

It belongs to the IlvD/Edd family. Homodimer. The cofactor is [2Fe-2S] cluster. It depends on Mg(2+) as a cofactor.

It carries out the reaction (2R)-2,3-dihydroxy-3-methylbutanoate = 3-methyl-2-oxobutanoate + H2O. The catalysed reaction is (2R,3R)-2,3-dihydroxy-3-methylpentanoate = (S)-3-methyl-2-oxopentanoate + H2O. It participates in amino-acid biosynthesis; L-isoleucine biosynthesis; L-isoleucine from 2-oxobutanoate: step 3/4. Its pathway is amino-acid biosynthesis; L-valine biosynthesis; L-valine from pyruvate: step 3/4. Functionally, functions in the biosynthesis of branched-chain amino acids. Catalyzes the dehydration of (2R,3R)-2,3-dihydroxy-3-methylpentanoate (2,3-dihydroxy-3-methylvalerate) into 2-oxo-3-methylpentanoate (2-oxo-3-methylvalerate) and of (2R)-2,3-dihydroxy-3-methylbutanoate (2,3-dihydroxyisovalerate) into 2-oxo-3-methylbutanoate (2-oxoisovalerate), the penultimate precursor to L-isoleucine and L-valine, respectively. This Stutzerimonas stutzeri (strain A1501) (Pseudomonas stutzeri) protein is Dihydroxy-acid dehydratase.